Consider the following 385-residue polypeptide: Succinate--CoA ligase [ADP-forming] subunit beta (385 aa).

The ATP-grasp domain occupies 9-244 (KALFRTFGVP…LDEEDPLEVE (236 aa)). ATP is bound by residues Lys-46, 53–55 (GRG), Glu-99, Gln-102, and Glu-107. Residues Asn-199 and Asp-213 each contribute to the Mg(2+) site. Substrate is bound by residues Asn-264 and 321–323 (GIL).

Belongs to the succinate/malate CoA ligase beta subunit family. As to quaternary structure, heterotetramer of two alpha and two beta subunits. It depends on Mg(2+) as a cofactor.

The enzyme catalyses succinate + ATP + CoA = succinyl-CoA + ADP + phosphate. It carries out the reaction GTP + succinate + CoA = succinyl-CoA + GDP + phosphate. The protein operates within carbohydrate metabolism; tricarboxylic acid cycle; succinate from succinyl-CoA (ligase route): step 1/1. In terms of biological role, succinyl-CoA synthetase functions in the citric acid cycle (TCA), coupling the hydrolysis of succinyl-CoA to the synthesis of either ATP or GTP and thus represents the only step of substrate-level phosphorylation in the TCA. The beta subunit provides nucleotide specificity of the enzyme and binds the substrate succinate, while the binding sites for coenzyme A and phosphate are found in the alpha subunit. The protein is Succinate--CoA ligase [ADP-forming] subunit beta of Desulforapulum autotrophicum (strain ATCC 43914 / DSM 3382 / VKM B-1955 / HRM2) (Desulfobacterium autotrophicum).